The primary structure comprises 1013 residues: Zinc finger and BTB domain-containing protein 4 (1013 aa).

The BTB domain occupies 30-152; the sequence is CDVTLIAGDT…IYSARLALPG (123 aa). Lys40 is covalently cross-linked (Glycyl lysine isopeptide (Lys-Gly) (interchain with G-Cter in SUMO2)). A compositionally biased stretch (low complexity) spans 67–110; sequence LPPATGGAAPNPATTTAASSSSSSSSSSSSSSSSASSSSSSSSS. 2 disordered regions span residues 67-124 and 183-221; these read LPPA…SPPR and DAWVPPTPAPMATSQPEEDSFGPGPRPAGEWEGDRAEAQ. A compositionally biased stretch (pro residues) spans 111–121; that stretch reads SPPPASPPASS. The segment at 186–348 is interaction with CBFA2T3; sequence VPPTPAPMAT…CRYCEKVFAL (163 aa). The C2H2-type 1; atypical zinc-finger motif lies at 234-256; that stretch reads LPCPQCGKSFIHPKRLQTHEAQC. Residues 257 to 281 are disordered; that stretch reads RRGASTRGSTGLGAGGAGPGGPAGV. The segment covering 266–279 has biased composition (gly residues); it reads TGLGAGGAGPGGPA. C2H2-type zinc fingers lie at residues 309 to 331, 337 to 359, and 365 to 388; these read YVCAACERSYVTLSSLKRHSNVH, YPCRYCEKVFALAEYRTKHEVWH, and YQCIFCWETFVTYYNLKTHQRAFH. Ser391 bears the Phosphoserine mark. Disordered regions lie at residues 428–765, 783–852, 883–904, and 972–1013; these read KTYS…STRF, HGQR…DPII, GREPGGGRGKSGSEGPVGAGEG, and VNPQ…GDVG. Positions 453–470 are enriched in pro residues; sequence ASPPPGPPPAPEPGPPPS. 2 stretches are compositionally biased toward low complexity: residues 496-506 and 531-554; these read TASTGGSQAAS and ATPTSPATAVSPATAAGPAMATTT. Lys573 participates in a covalent cross-link: Glycyl lysine isopeptide (Lys-Gly) (interchain with G-Cter in SUMO2). Positions 576-590 are enriched in gly residues; it reads GGIGGGGGPPTGAGR. A compositionally biased stretch (basic and acidic residues) spans 608 to 625; sequence IGEEAIVKRRISETDLRP. Residue Lys615 forms a Glycyl lysine isopeptide (Lys-Gly) (interchain with G-Cter in SUMO2) linkage. The stretch at 627-663 forms a coiled coil; it reads ELSGEEMEESEEDEEEEDEEEEEEDEEESKAGGEDQL. Over residues 629–654 the composition is skewed to acidic residues; that stretch reads SGEEMEESEEDEEEEDEEEEEEDEEE. Positions 678 to 689 are enriched in gly residues; that stretch reads AAGGASVGGSGL. C2H2-type zinc fingers lie at residues 726 to 748 and 765 to 787; these read HRCGDCAQTFTTLRKLRKHQEAH and FTCPHCAKVCKTAAALSRHGQRH. Thr795 and Thr797 each carry phosphothreonine; by HIPK2. Residues 836–846 are compositionally biased toward low complexity; it reads TAAEEASETAS. Gly residues predominate over residues 883 to 902; sequence GREPGGGRGKSGSEGPVGAG. A compositionally biased stretch (pro residues) spans 976-995; that stretch reads AAPPAPPTPPPPTLPPPIPP. Thr983 is subject to Phosphothreonine; by HIPK2. A compositionally biased stretch (basic and acidic residues) spans 997–1013; sequence GEGERAGVERTQKGDVG.

As to quaternary structure, interacts with HIPK2. Interacts with CBFA2T3. Interacts with ZBTB38. In terms of processing, phosphorylated by HIPK2. This phosphorylation reduces stability and triggers ZBTB4 protein degradation in response to DNA damage.

It is found in the nucleus. It localises to the chromosome. In terms of biological role, transcriptional repressor with bimodal DNA-binding specificity. Represses transcription in a methyl-CpG-dependent manner. Binds with a higher affinity to methylated CpG dinucleotides in the consensus sequence 5'-CGCG-3' but can also bind to the non-methylated consensus sequence 5'-CTGCNA-3' also known as the consensus kaiso binding site (KBS). Can also bind specifically to a single methyl-CpG pair and can bind hemimethylated DNA but with a lower affinity compared to methylated DNA. Plays a role in postnatal myogenesis, may be involved in the regulation of satellite cells self-renewal. In Homo sapiens (Human), this protein is Zinc finger and BTB domain-containing protein 4 (ZBTB4).